The following is a 581-amino-acid chain: 4-hydroxy-3-methylbut-2-en-1-yl diphosphate synthase (flavodoxin) (581 aa).

Residues Cys-489, Cys-492, Cys-523, and Glu-530 each coordinate [4Fe-4S] cluster.

This sequence belongs to the IspG family. [4Fe-4S] cluster is required as a cofactor.

It carries out the reaction (2E)-4-hydroxy-3-methylbut-2-enyl diphosphate + oxidized [flavodoxin] + H2O + 2 H(+) = 2-C-methyl-D-erythritol 2,4-cyclic diphosphate + reduced [flavodoxin]. The protein operates within isoprenoid biosynthesis; isopentenyl diphosphate biosynthesis via DXP pathway; isopentenyl diphosphate from 1-deoxy-D-xylulose 5-phosphate: step 5/6. In terms of biological role, converts 2C-methyl-D-erythritol 2,4-cyclodiphosphate (ME-2,4cPP) into 1-hydroxy-2-methyl-2-(E)-butenyl 4-diphosphate. The protein is 4-hydroxy-3-methylbut-2-en-1-yl diphosphate synthase (flavodoxin) of Porphyromonas gingivalis (strain ATCC BAA-308 / W83).